The primary structure comprises 90 residues: DNA-binding protein HU-alpha (90 aa).

It belongs to the bacterial histone-like protein family. Heterodimer of an alpha and a beta chain.

Functionally, histone-like DNA-binding protein which is capable of wrapping DNA to stabilize it, and thus to prevent its denaturation under extreme environmental conditions. This Vibrio cholerae serotype O1 (strain ATCC 39315 / El Tor Inaba N16961) protein is DNA-binding protein HU-alpha (hupA).